A 100-amino-acid polypeptide reads, in one-letter code: Large ribosomal subunit protein bL21 (100 aa).

It belongs to the bacterial ribosomal protein bL21 family. In terms of assembly, part of the 50S ribosomal subunit. Contacts protein L20.

In terms of biological role, this protein binds to 23S rRNA in the presence of protein L20. This is Large ribosomal subunit protein bL21 from Rhodospirillum rubrum (strain ATCC 11170 / ATH 1.1.1 / DSM 467 / LMG 4362 / NCIMB 8255 / S1).